A 463-amino-acid polypeptide reads, in one-letter code: Argininosuccinate lyase (463 aa).

It belongs to the lyase 1 family. Argininosuccinate lyase subfamily.

The protein localises to the cytoplasm. It carries out the reaction 2-(N(omega)-L-arginino)succinate = fumarate + L-arginine. Its pathway is amino-acid biosynthesis; L-arginine biosynthesis; L-arginine from L-ornithine and carbamoyl phosphate: step 3/3. This Streptococcus pneumoniae serotype 2 (strain D39 / NCTC 7466) protein is Argininosuccinate lyase.